The following is a 152-amino-acid chain: Protein SprT-like (152 aa).

One can recognise a SprT-like domain in the interval Q7–I148. H67 provides a ligand contact to Zn(2+). The active site involves E68. A Zn(2+)-binding site is contributed by H71.

Belongs to the SprT family. Requires Zn(2+) as cofactor.

The protein resides in the cytoplasm. This Bacillus anthracis (strain A0248) protein is Protein SprT-like.